The primary structure comprises 39 residues: Photosystem II reaction center protein J (39 aa).

The chain crosses the membrane as a helical span at residues 7 to 27 (IPLWLVATIAGLGVIAVLGLF).

The protein belongs to the PsbJ family. As to quaternary structure, PSII is composed of 1 copy each of membrane proteins PsbA, PsbB, PsbC, PsbD, PsbE, PsbF, PsbH, PsbI, PsbJ, PsbK, PsbL, PsbM, PsbT, PsbX, PsbY, PsbZ, Psb30/Ycf12, peripheral proteins PsbO, CyanoQ (PsbQ), PsbU, PsbV and a large number of cofactors. It forms dimeric complexes.

It is found in the cellular thylakoid membrane. In terms of biological role, one of the components of the core complex of photosystem II (PSII). PSII is a light-driven water:plastoquinone oxidoreductase that uses light energy to abstract electrons from H(2)O, generating O(2) and a proton gradient subsequently used for ATP formation. It consists of a core antenna complex that captures photons, and an electron transfer chain that converts photonic excitation into a charge separation. The chain is Photosystem II reaction center protein J from Microcystis aeruginosa (strain NIES-843 / IAM M-2473).